Consider the following 943-residue polypeptide: Isoleucine--tRNA ligase (943 aa).

Positions 58–68 (PYANGSIHIGH) match the 'HIGH' region motif. E567 contributes to the L-isoleucyl-5'-AMP binding site. A 'KMSKS' region motif is present at residues 608-612 (KMSKS). Residue K611 coordinates ATP. 4 residues coordinate Zn(2+): C906, C909, C926, and C929.

Belongs to the class-I aminoacyl-tRNA synthetase family. IleS type 1 subfamily. As to quaternary structure, monomer. Zn(2+) is required as a cofactor.

The protein localises to the cytoplasm. It catalyses the reaction tRNA(Ile) + L-isoleucine + ATP = L-isoleucyl-tRNA(Ile) + AMP + diphosphate. Functionally, catalyzes the attachment of isoleucine to tRNA(Ile). As IleRS can inadvertently accommodate and process structurally similar amino acids such as valine, to avoid such errors it has two additional distinct tRNA(Ile)-dependent editing activities. One activity is designated as 'pretransfer' editing and involves the hydrolysis of activated Val-AMP. The other activity is designated 'posttransfer' editing and involves deacylation of mischarged Val-tRNA(Ile). This Pseudomonas fluorescens (strain ATCC BAA-477 / NRRL B-23932 / Pf-5) protein is Isoleucine--tRNA ligase.